The chain runs to 102 residues: Small ribosomal subunit protein uS10 (102 aa).

Belongs to the universal ribosomal protein uS10 family. In terms of assembly, part of the 30S ribosomal subunit.

Involved in the binding of tRNA to the ribosomes. This is Small ribosomal subunit protein uS10 from Tropheryma whipplei (strain TW08/27) (Whipple's bacillus).